Consider the following 160-residue polypeptide: Ribosomal RNA large subunit methyltransferase H (160 aa).

S-adenosyl-L-methionine contacts are provided by L76 and G108.

This sequence belongs to the RNA methyltransferase RlmH family. Homodimer.

The protein localises to the cytoplasm. It carries out the reaction pseudouridine(1915) in 23S rRNA + S-adenosyl-L-methionine = N(3)-methylpseudouridine(1915) in 23S rRNA + S-adenosyl-L-homocysteine + H(+). Its function is as follows. Specifically methylates the pseudouridine at position 1915 (m3Psi1915) in 23S rRNA. This Afipia carboxidovorans (strain ATCC 49405 / DSM 1227 / KCTC 32145 / OM5) (Oligotropha carboxidovorans) protein is Ribosomal RNA large subunit methyltransferase H.